The primary structure comprises 28 residues: Dermaseptin-SP1 (28 aa).

As to expression, expressed by the skin glands.

Its subcellular location is the secreted. In terms of biological role, probable antimicrobial peptide which stimulates insulin-release in glucose-responsive BRIN-BD 11 cells. The chain is Dermaseptin-SP1 from Agalychnis spurrelli (Gliding leaf frog).